We begin with the raw amino-acid sequence, 62 residues long: Large ribosomal subunit protein bL33 (62 aa).

This sequence belongs to the bacterial ribosomal protein bL33 family.

In Porphyromonas gingivalis (strain ATCC 33277 / DSM 20709 / CIP 103683 / JCM 12257 / NCTC 11834 / 2561), this protein is Large ribosomal subunit protein bL33.